A 499-amino-acid polypeptide reads, in one-letter code: Flotillin-like protein 2 (499 aa).

C37 carries the S-palmitoyl cysteine lipid modification. A coiled-coil region spans residues 243–319 (LREEAKVKAE…LRLTEKLKAE (77 aa)).

The protein belongs to the band 7/mec-2 family. Flotillin subfamily. May be palmitoylated.

Its subcellular location is the cell membrane. The protein localises to the membrane. It localises to the caveola. May act as a scaffolding protein within caveolar membranes, functionally participating in formation of caveolae or caveolae-like vesicles. The polypeptide is Flotillin-like protein 2 (FLOT2) (Oryza sativa subsp. japonica (Rice)).